Here is a 151-residue protein sequence, read N- to C-terminus: SsrA-binding protein (151 aa).

Belongs to the SmpB family.

It is found in the cytoplasm. Functionally, required for rescue of stalled ribosomes mediated by trans-translation. Binds to transfer-messenger RNA (tmRNA), required for stable association of tmRNA with ribosomes. tmRNA and SmpB together mimic tRNA shape, replacing the anticodon stem-loop with SmpB. tmRNA is encoded by the ssrA gene; the 2 termini fold to resemble tRNA(Ala) and it encodes a 'tag peptide', a short internal open reading frame. During trans-translation Ala-aminoacylated tmRNA acts like a tRNA, entering the A-site of stalled ribosomes, displacing the stalled mRNA. The ribosome then switches to translate the ORF on the tmRNA; the nascent peptide is terminated with the 'tag peptide' encoded by the tmRNA and targeted for degradation. The ribosome is freed to recommence translation, which seems to be the essential function of trans-translation. The polypeptide is SsrA-binding protein (Chlamydia trachomatis serovar A (strain ATCC VR-571B / DSM 19440 / HAR-13)).